A 775-amino-acid polypeptide reads, in one-letter code: MRSMRSGRDNNICFLGFLSFALISLPSLSLALTNPDDVAAINSLFLALESPLLPGWVASGGDPCGESWQGVLCNASQVETIILISANLGGELGVGLNMFTSLKAMDFSNNHIGGSIPSTLPVSLQNLFLSGNNFTGTIPESLSSLKSLSVMSLNNNLLSGKIPDVFQDLGLMINIDLSSNNLSGPLPPSMQNLSTLTSLLLQNNHLSGELDVLQDLPLKDLNVENNLFNGPIPEKLLSIPNFIKGGNLFNVTIAPSPSPETPPSPTSPKRPFFGPPSPNASAGHGQAHVRSPPSDHHPSRPTPQGKEDSFTSKRIIWISILGAFSFVVLALVCLLCGRKCLRKREDSEQLSKPHLTSEYGRAREGSRSNASMLPPSNTFNKDKEARPKERVGGASKLHGGAERSVGSESKQESHEIDMNGNAMDLMHPSSIPPIKRVIAKATEPAEASLKRTTSKSHGPLTAVKHFTVASLQQHTNSFSHENLIGTGMLGSVYRAELPGGKLFAVRKLDKKSPNHEEEGKFLELVNNIDRIRHANIVQLVGFCSEHSQRLLIHEYCRNGTLHDLLHIDDRLKIELSWNVRVRIALEAAKALEYLHEICDPPSIHRNFKSANILLDDDIRVHVSDCGLAPLISSGAVSQLSGQLLAAYGYGAPEFEYGIYTMKCDVYSFGVVMLELLTGRKSYDKKRDRGEQFLVRWAIPQLHDIDALAKMVDPSLKGDYPAKSLSHFADVISRCVQSEPEYRPLMSEVVQDLSDMIQREHRRNDSNGDNQYTGRR.

The N-terminal stretch at methionine 1–alanine 31 is a signal peptide. Topologically, residues leucine 32–arginine 314 are extracellular. 6 LRR repeats span residues serine 101–valine 122, serine 123–lysine 146, serine 147–leucine 169, leucine 171–leucine 193, threonine 195–proline 217, and leucine 218–serine 238. Asparagine 133 carries an N-linked (GlcNAc...) asparagine glycan. 2 N-linked (GlcNAc...) asparagine glycosylation sites follow: asparagine 181 and asparagine 192. N-linked (GlcNAc...) asparagine glycosylation is present at asparagine 250. The tract at residues alanine 254–aspartate 308 is disordered. The span at serine 256–proline 278 shows a compositional bias: pro residues. A glycan (N-linked (GlcNAc...) asparagine) is linked at asparagine 279. A helical transmembrane segment spans residues isoleucine 315 to leucine 335. Residues cysteine 336–arginine 775 are Cytoplasmic-facing. The tract at residues glutamate 345–histidine 414 is disordered. A compositionally biased stretch (polar residues) spans arginine 367 to phenylalanine 379. Basic and acidic residues predominate over residues asparagine 380–valine 391. Residues phenylalanine 478–isoleucine 756 enclose the Protein kinase domain.

This sequence belongs to the protein kinase superfamily. Ser/Thr protein kinase family. In terms of tissue distribution, expressed in roots, stems, leaves and flowers. Low expression in seedlings and siliques.

Its subcellular location is the membrane. Not essential for epidermal patterning and not redundant with STRUBBELIG. The polypeptide is Protein STRUBBELIG-RECEPTOR FAMILY 1 (SRF1) (Arabidopsis thaliana (Mouse-ear cress)).